The primary structure comprises 115 residues: Large ribosomal subunit protein bL20 (115 aa).

It belongs to the bacterial ribosomal protein bL20 family.

Binds directly to 23S ribosomal RNA and is necessary for the in vitro assembly process of the 50S ribosomal subunit. It is not involved in the protein synthesizing functions of that subunit. The protein is Large ribosomal subunit protein bL20 of Chlorobium phaeovibrioides (strain DSM 265 / 1930) (Prosthecochloris vibrioformis (strain DSM 265)).